We begin with the raw amino-acid sequence, 229 residues long: Cytochrome c oxidase subunit 2 (229 aa).

Topologically, residues 1–26 are mitochondrial intermembrane; it reads MSTWANLGLQDSASPLMEQLIFFHDH. A helical membrane pass occupies residues 27–48; the sequence is ALLILVMITVLVGYLMFMLFFN. Residues 49 to 62 lie on the Mitochondrial matrix side of the membrane; the sequence is SYVNRFLLHGQLIE. A helical membrane pass occupies residues 63-82; sequence MIWTILPAIILLFIAMPSLR. The Mitochondrial intermembrane portion of the chain corresponds to 83-229; that stretch reads LLYLLDEINE…IKWISNSVNS (147 aa). Residues His-161, Cys-196, Glu-198, Cys-200, His-204, and Met-207 each contribute to the Cu cation site. Residue Glu-198 coordinates Mg(2+).

This sequence belongs to the cytochrome c oxidase subunit 2 family. In terms of assembly, component of the cytochrome c oxidase (complex IV, CIV), a multisubunit enzyme composed of a catalytic core of 3 subunits and several supernumerary subunits. The complex exists as a monomer or a dimer and forms supercomplexes (SCs) in the inner mitochondrial membrane with ubiquinol-cytochrome c oxidoreductase (cytochrome b-c1 complex, complex III, CIII). Requires Cu cation as cofactor.

It localises to the mitochondrion inner membrane. The catalysed reaction is 4 Fe(II)-[cytochrome c] + O2 + 8 H(+)(in) = 4 Fe(III)-[cytochrome c] + 2 H2O + 4 H(+)(out). Functionally, component of the cytochrome c oxidase, the last enzyme in the mitochondrial electron transport chain which drives oxidative phosphorylation. The respiratory chain contains 3 multisubunit complexes succinate dehydrogenase (complex II, CII), ubiquinol-cytochrome c oxidoreductase (cytochrome b-c1 complex, complex III, CIII) and cytochrome c oxidase (complex IV, CIV), that cooperate to transfer electrons derived from NADH and succinate to molecular oxygen, creating an electrochemical gradient over the inner membrane that drives transmembrane transport and the ATP synthase. Cytochrome c oxidase is the component of the respiratory chain that catalyzes the reduction of oxygen to water. Electrons originating from reduced cytochrome c in the intermembrane space (IMS) are transferred via the dinuclear copper A center (CU(A)) of subunit 2 and heme A of subunit 1 to the active site in subunit 1, a binuclear center (BNC) formed by heme A3 and copper B (CU(B)). The BNC reduces molecular oxygen to 2 water molecules using 4 electrons from cytochrome c in the IMS and 4 protons from the mitochondrial matrix. This is Cytochrome c oxidase subunit 2 (mt:CoII) from Drosophila narragansett (Fruit fly).